The primary structure comprises 456 residues: MNNLTCFKAYDIRGRLGEELNEDIAWRIGRAYGEYLKPKTIVLGGDVRLTSEALKLALAKGLQDAGVDVLDIGMSGTEEIYFATFHLGVDGGIEVTASHNPMDYNGMKLVREGARPISGDTGLRDVQRLAEAGDFPPVNDAARGSYRQISLRDAYIDHLLAYISVNNLTPLKLVVNSGNGAAGPVIDAIEARLKALGAPVEFIKIHNTPDGTFPNGIPNPLLPECRDDTRKAVIEHGADMGIAFDGDFDRCFLFDEKGQFIEGYYIVGLLAEAFLEKHPGAKIIHDPRLTWNTEAVVTAAGGTPVMSKTGHAFIKERMRTEDAIYGGEMSAHHYFRDFAYCDSGMIPWLLVAELVCLKGQSLGELVRDRMAAFPASGEINSRLAEPAAAIARVEAHFAEEAQAVDRTDGLSMSFADWRFNLRSSNTEPVVRLNVESRGDIPLMEARTKEILQLLNS.

The Phosphoserine intermediate role is filled by Ser-98. Mg(2+) contacts are provided by Ser-98, Asp-245, Asp-247, and Asp-249.

It belongs to the phosphohexose mutase family. The cofactor is Mg(2+).

It carries out the reaction alpha-D-mannose 1-phosphate = D-mannose 6-phosphate. It participates in nucleotide-sugar biosynthesis; GDP-alpha-D-mannose biosynthesis; alpha-D-mannose 1-phosphate from D-fructose 6-phosphate: step 2/2. The protein operates within bacterial outer membrane biogenesis; LPS O-antigen biosynthesis. Its function is as follows. Involved in GDP-mannose biosynthesis which serves as the activated sugar nucleotide precursor for mannose residues in cell surface polysaccharides. This enzyme participates in synthesis of the LPS O antigen. The protein is Phosphomannomutase (manB) of Salmonella montevideo.